An 80-amino-acid chain; its full sequence is Protein UL148B (80 aa).

Residues 10–30 (AICVGLVMGVTVIASCALLVF) traverse the membrane as a helical segment.

The protein localises to the host membrane. The sequence is that of Protein UL148B (UL148B) from Homo sapiens (Human).